A 438-amino-acid chain; its full sequence is sn-glycerol-3-phosphate-binding periplasmic protein UgpB (438 aa).

The signal sequence occupies residues 1–23 (MISLRHTALGLALSLAFTGQALA). Sn-glycerol 3-phosphate is bound by residues Tyr65, Glu89, Ser144, Ser270, Gly307, Tyr346, and Arg397.

Belongs to the bacterial solute-binding protein 1 family. In terms of assembly, the complex is composed of two ATP-binding proteins (UgpC), two transmembrane proteins (UgpA and UgpE) and a solute-binding protein (UgpB).

It is found in the periplasm. Functionally, part of the ABC transporter complex UgpBAEC involved in sn-glycerol-3-phosphate (G3P) import. Binds G3P. The polypeptide is sn-glycerol-3-phosphate-binding periplasmic protein UgpB (ugpB) (Salmonella paratyphi A (strain ATCC 9150 / SARB42)).